A 356-amino-acid polypeptide reads, in one-letter code: UDP-N-acetylglucosamine--N-acetylmuramyl-(pentapeptide) pyrophosphoryl-undecaprenol N-acetylglucosamine transferase (356 aa).

UDP-N-acetyl-alpha-D-glucosamine-binding positions include 12-14 (TGG), Asn124, Arg163, Ser188, Ile242, 261-266 (ALTVCE), and Gln287.

Belongs to the glycosyltransferase 28 family. MurG subfamily.

The protein resides in the cell inner membrane. It carries out the reaction di-trans,octa-cis-undecaprenyl diphospho-N-acetyl-alpha-D-muramoyl-L-alanyl-D-glutamyl-meso-2,6-diaminopimeloyl-D-alanyl-D-alanine + UDP-N-acetyl-alpha-D-glucosamine = di-trans,octa-cis-undecaprenyl diphospho-[N-acetyl-alpha-D-glucosaminyl-(1-&gt;4)]-N-acetyl-alpha-D-muramoyl-L-alanyl-D-glutamyl-meso-2,6-diaminopimeloyl-D-alanyl-D-alanine + UDP + H(+). The protein operates within cell wall biogenesis; peptidoglycan biosynthesis. Cell wall formation. Catalyzes the transfer of a GlcNAc subunit on undecaprenyl-pyrophosphoryl-MurNAc-pentapeptide (lipid intermediate I) to form undecaprenyl-pyrophosphoryl-MurNAc-(pentapeptide)GlcNAc (lipid intermediate II). The sequence is that of UDP-N-acetylglucosamine--N-acetylmuramyl-(pentapeptide) pyrophosphoryl-undecaprenol N-acetylglucosamine transferase from Stutzerimonas stutzeri (strain A1501) (Pseudomonas stutzeri).